A 205-amino-acid polypeptide reads, in one-letter code: Adenylyl-sulfate kinase (205 aa).

31-38 (GLSGAGKS) is a binding site for ATP. The active-site Phosphoserine intermediate is Ser105.

The protein belongs to the APS kinase family.

It carries out the reaction adenosine 5'-phosphosulfate + ATP = 3'-phosphoadenylyl sulfate + ADP + H(+). Its pathway is sulfur metabolism; hydrogen sulfide biosynthesis; sulfite from sulfate: step 2/3. Functionally, catalyzes the synthesis of activated sulfate. The protein is Adenylyl-sulfate kinase of Shewanella sp. (strain MR-7).